The following is a 25-amino-acid chain: Caerin-1.3 (25 aa).

Leucine 25 is subject to Leucine amide.

Expressed by the skin parotoid and/or rostral glands.

It is found in the secreted. Antibacterial peptide, that adopts an alpha helical conformation which can disrupt bacterial membranes. Each caerin displays a different antimicrobial specificity. This chain is Caerin-1.3, found in Ranoidea caerulea (Green tree frog).